We begin with the raw amino-acid sequence, 615 residues long: Increased rDNA silencing protein 4 (615 aa).

4 disordered regions span residues 38-135 (SNEV…SSHS), 152-260 (LLGI…NRSQ), 277-304 (PSIA…NYSS), and 323-445 (KPKH…NEDK). Residues 50 to 65 (VSRNPQTRLSEPSLQK) are compositionally biased toward polar residues. Low complexity-rich tracts occupy residues 121–135 (HSQS…SSHS) and 157–168 (SRSSSRNGSNES). A Phosphoserine modification is found at S180. The segment covering 184 to 198 (LLTSFSSGRRLSSSS) has biased composition (low complexity). The segment covering 248 to 260 (NPDTSDVISNRSQ) has biased composition (polar residues). The span at 281–290 (SSNTTTTTSN) shows a compositional bias: low complexity. Positions 365–377 (ENDHASSLHEGNL) are enriched in basic and acidic residues. Residues 389–402 (DVYDDTDSDSESDQ) show a composition bias toward acidic residues. Residues 409–438 (KPRKRDRIKRKIRNSANKTAHHRPIHRTRD) show a composition bias toward basic residues. In terms of domain architecture, EH spans 460 to 571 (ERKRYESMWV…QCVWDSVDRY (112 aa)).

Belongs to the IRS4 family. As to quaternary structure, interacts with INP51.

With TAX4, acts as a positive regulator of INP51 activity and phosphatidylinositol 4,5-bisphosphate turnover. Negatively regulates signaling through the cell integrity pathway, including the MAP kinase SLT2. Also seems to be involved in rDNA silencing. The chain is Increased rDNA silencing protein 4 (IRS4) from Saccharomyces cerevisiae (strain ATCC 204508 / S288c) (Baker's yeast).